The chain runs to 612 residues: Cyclin-dependent kinase 8 (612 aa).

In terms of domain architecture, Protein kinase spans 23-345; the sequence is FENSKEIGRG…CEEAMNDIYF (323 aa). ATP is bound by residues 29–37 and K57; that span reads IGRGTYGLV. Catalysis depends on D155, which acts as the Proton acceptor. 5 stretches are compositionally biased toward low complexity: residues 403–455, 472–483, 543–555, 564–573, and 600–612; these read QQQM…MGQP, HQMMQQQHQSQH, PQPG…QQRP, QGYMNPQMGM, and NPQQ…QYHR. Disordered stretches follow at residues 403 to 483 and 543 to 612; these read QQQM…QSQH and PQPG…QYHR.

It belongs to the protein kinase superfamily. CMGC Ser/Thr protein kinase family. CDC2/CDKX subfamily. In terms of assembly, component of the Mediator complex. The cofactor is Mg(2+).

The protein localises to the nucleus. It catalyses the reaction L-seryl-[protein] + ATP = O-phospho-L-seryl-[protein] + ADP + H(+). The catalysed reaction is L-threonyl-[protein] + ATP = O-phospho-L-threonyl-[protein] + ADP + H(+). It carries out the reaction [DNA-directed RNA polymerase] + ATP = phospho-[DNA-directed RNA polymerase] + ADP + H(+). Its function is as follows. Component of the Mediator complex, a coactivator involved in regulated gene transcription of nearly all RNA polymerase II-dependent genes. Mediator functions as a bridge to convey information from gene-specific regulatory proteins to the basal RNA polymerase II transcription machinery. Mediator is recruited to promoters by direct interactions with regulatory proteins and serves as a scaffold for the assembly of a functional pre-initiation complex with RNA polymerase II and the general transcription factors. Phosphorylates the CTD (C-terminal domain) of the large subunit of RNA polymerase II (RNAp II), which may inhibit the formation of a transcription initiation complex. This chain is Cyclin-dependent kinase 8 (cdk-8), found in Caenorhabditis briggsae.